We begin with the raw amino-acid sequence, 299 residues long: Taste receptor type 2 member 4 (299 aa).

The Extracellular portion of the chain corresponds to 1–9 (MLWLFYSSA). The chain crosses the membrane as a helical span at residues 10–30 (IIASVILDFVGIIMSLFITVV). The Cytoplasmic portion of the chain corresponds to 31 to 46 (NYKTWVKSHRISSSER). A helical membrane pass occupies residues 47-67 (ILFSLGITRFFMLALFLVNTI). Residues 68–81 (YFVSSNKERSVYLS) lie on the Extracellular side of the membrane. The helical transmembrane segment at 82–102 (AFFVLCFMFLDSSSLWFVTLL) threads the bilayer. Residues 103–131 (NSLYCVKITNFQHSVFLLLKRNISPKIPR) lie on the Cytoplasmic side of the membrane. Residues 132 to 152 (LLPACVLISAFTTCLYITLSQ) form a helical membrane-spanning segment. The Extracellular portion of the chain corresponds to 153-172 (ASPFPELVTKRNNTSFNISE). N-linked (GlcNAc...) asparagine glycans are attached at residues Asn164, Asn165, and Asn169. Residues 173–193 (GILSLVVSFVLSSSLQFIINV) form a helical membrane-spanning segment. Residues 194-230 (TSASLLIYSLRRHIRKMQKNATGFWNPQTEAHVGAMK) are Cytoplasmic-facing. Residues 231–251 (LMIYFLILYIPYSVATLVQYL) traverse the membrane as a helical segment. Over 252-262 (PFYAGMDMGTK) the chain is Extracellular. Residues 263 to 283 (SICLIFATLYSPGHSVLIIIT) form a helical membrane-spanning segment. Residues 284-299 (HPKLKTTAKKILCFKK) lie on the Cytoplasmic side of the membrane.

The protein belongs to the G-protein coupled receptor T2R family.

The protein localises to the membrane. Its subcellular location is the cell projection. It localises to the cilium membrane. In terms of biological role, gustducin-coupled receptor implicated in the perception of bitter compounds in the oral cavity and the gastrointestinal tract. Signals through PLCB2 and the calcium-regulated cation channel TRPM5. In airway epithelial cells, binding of denatonium increases the intracellular calcium ion concentration and stimulates ciliary beat frequency. The chain is Taste receptor type 2 member 4 (TAS2R4) from Papio hamadryas (Hamadryas baboon).